A 277-amino-acid chain; its full sequence is Glutamate racemase (277 aa).

Substrate is bound by residues 13–14 (DS) and 45–46 (YG). Cys-76 acts as the Proton donor/acceptor in catalysis. Residue 77–78 (NT) coordinates substrate. Cys-186 (proton donor/acceptor) is an active-site residue. Position 187–188 (187–188 (TH)) interacts with substrate.

Belongs to the aspartate/glutamate racemases family.

The enzyme catalyses L-glutamate = D-glutamate. It functions in the pathway cell wall biogenesis; peptidoglycan biosynthesis. Functionally, provides the (R)-glutamate required for cell wall biosynthesis. The sequence is that of Glutamate racemase from Ralstonia nicotianae (strain ATCC BAA-1114 / GMI1000) (Ralstonia solanacearum).